The chain runs to 169 residues: MPLLDSFTVDHTRMNAPAVRVAKSMSTPKGDTITVFDLRFCVPNKQILSERGIHTLEHLFAGFMRDHLNGDNVEIIDISPMGCRTGFYMSLIGAPSESIVADAWLAAMQDVLAVVEQSEIPELNEYQCGTYEMHSLEQAKEIARSIISAGINVNRNDELTLSDEILNGL.

Fe cation is bound by residues histidine 54, histidine 58, and cysteine 128.

This sequence belongs to the LuxS family. Homodimer. The cofactor is Fe cation.

It carries out the reaction S-(5-deoxy-D-ribos-5-yl)-L-homocysteine = (S)-4,5-dihydroxypentane-2,3-dione + L-homocysteine. In terms of biological role, involved in the synthesis of autoinducer 2 (AI-2) which is secreted by bacteria and is used to communicate both the cell density and the metabolic potential of the environment. The regulation of gene expression in response to changes in cell density is called quorum sensing. Catalyzes the transformation of S-ribosylhomocysteine (RHC) to homocysteine (HC) and 4,5-dihydroxy-2,3-pentadione (DPD). This chain is S-ribosylhomocysteine lyase, found in Shewanella piezotolerans (strain WP3 / JCM 13877).